The following is a 107-amino-acid chain: uncharacterized protein (107 aa).

2 helical membrane passes run Trp-5 to Val-25 and Ile-42 to Phe-62. The span at Ile-82–Asp-92 shows a compositional bias: basic and acidic residues. The tract at residues Ile-82–Asp-107 is disordered.

Its subcellular location is the cell membrane. This is an uncharacterized protein from Bacillus subtilis (strain 168).